The sequence spans 423 residues: Histidine--tRNA ligase (423 aa).

Belongs to the class-II aminoacyl-tRNA synthetase family. In terms of assembly, homodimer.

It is found in the cytoplasm. It catalyses the reaction tRNA(His) + L-histidine + ATP = L-histidyl-tRNA(His) + AMP + diphosphate + H(+). This chain is Histidine--tRNA ligase, found in Laribacter hongkongensis (strain HLHK9).